The primary structure comprises 557 residues: Formate--tetrahydrofolate ligase (557 aa).

67 to 74 (TPAGEGKT) contributes to the ATP binding site.

The protein belongs to the formate--tetrahydrofolate ligase family.

It catalyses the reaction (6S)-5,6,7,8-tetrahydrofolate + formate + ATP = (6R)-10-formyltetrahydrofolate + ADP + phosphate. It functions in the pathway one-carbon metabolism; tetrahydrofolate interconversion. This Cereibacter sphaeroides (strain ATCC 17025 / ATH 2.4.3) (Rhodobacter sphaeroides) protein is Formate--tetrahydrofolate ligase.